The chain runs to 434 residues: Trigger factor (434 aa).

The PPIase FKBP-type domain maps to 160–245 (GDKVKMNFVG…LTEVLAANLP (86 aa)).

The protein belongs to the FKBP-type PPIase family. Tig subfamily.

Its subcellular location is the cytoplasm. It carries out the reaction [protein]-peptidylproline (omega=180) = [protein]-peptidylproline (omega=0). Involved in protein export. Acts as a chaperone by maintaining the newly synthesized protein in an open conformation. Functions as a peptidyl-prolyl cis-trans isomerase. The protein is Trigger factor of Shewanella sp. (strain MR-4).